The chain runs to 671 residues: DNA ligase (671 aa).

Residues 31 to 35, 80 to 81, and Glu110 contribute to the NAD(+) site; these read DAEYD and SL. The active-site N6-AMP-lysine intermediate is Lys112. 4 residues coordinate NAD(+): Arg133, Glu167, Lys283, and Lys307. Residues Cys401, Cys404, Cys419, and Cys424 each coordinate Zn(2+). Positions 587–671 constitute a BRCT domain; sequence EEELVFAGKT…YLPDEGGLNE (85 aa).

The protein belongs to the NAD-dependent DNA ligase family. LigA subfamily. It depends on Mg(2+) as a cofactor. Mn(2+) serves as cofactor.

It catalyses the reaction NAD(+) + (deoxyribonucleotide)n-3'-hydroxyl + 5'-phospho-(deoxyribonucleotide)m = (deoxyribonucleotide)n+m + AMP + beta-nicotinamide D-nucleotide.. Its function is as follows. DNA ligase that catalyzes the formation of phosphodiester linkages between 5'-phosphoryl and 3'-hydroxyl groups in double-stranded DNA using NAD as a coenzyme and as the energy source for the reaction. It is essential for DNA replication and repair of damaged DNA. This is DNA ligase from Listeria innocua serovar 6a (strain ATCC BAA-680 / CLIP 11262).